Consider the following 208-residue polypeptide: Uracil phosphoribosyltransferase (208 aa).

Residues arginine 78, arginine 103, and aspartate 130–serine 138 contribute to the 5-phospho-alpha-D-ribose 1-diphosphate site. Residues isoleucine 193 and glycine 198–alanine 200 each bind uracil. Aspartate 199 is a binding site for 5-phospho-alpha-D-ribose 1-diphosphate.

It belongs to the UPRTase family. The cofactor is Mg(2+).

It carries out the reaction UMP + diphosphate = 5-phospho-alpha-D-ribose 1-diphosphate + uracil. It functions in the pathway pyrimidine metabolism; UMP biosynthesis via salvage pathway; UMP from uracil: step 1/1. With respect to regulation, allosterically activated by GTP. Catalyzes the conversion of uracil and 5-phospho-alpha-D-ribose 1-diphosphate (PRPP) to UMP and diphosphate. The protein is Uracil phosphoribosyltransferase of Brucella canis (strain ATCC 23365 / NCTC 10854 / RM-666).